A 257-amino-acid polypeptide reads, in one-letter code: 3-alpha-hydroxysteroid dehydrogenase/carbonyl reductase (257 aa).

NAD(+) contacts are provided by residues Gly8 to Ile13, Asp32, Asp41 to Leu42, and Gly71. Substrate is bound at residue Ser114. NAD(+) is bound by residues Tyr155 and Lys159. Tyr155 serves as the catalytic Proton acceptor.

It belongs to the short-chain dehydrogenases/reductases (SDR) family. Homodimer.

The protein resides in the cytoplasm. The enzyme catalyses a 3alpha-hydroxysteroid + NADP(+) = a 3-oxosteroid + NADPH + H(+). The catalysed reaction is a 3alpha-hydroxysteroid + NAD(+) = a 3-oxosteroid + NADH + H(+). Its function is as follows. Catalyzes the reversible interconversion of hydroxy and oxo groups at position 3 of the steroid nucleus. Along with the 3 alpha-hydroxysteroid dehydrogenase and 3-oxo-reductase activities towards a variety of cis or trans fused A/B ring steroids, it also reduces several xenobiotic carbonyl compounds, including a metyrapone-based class of insecticides, to the respective alcohol metabolites. No detectable activity on testosterone, progesterone or 3-oxo-desogestrel. In Comamonas testosteroni (Pseudomonas testosteroni), this protein is 3-alpha-hydroxysteroid dehydrogenase/carbonyl reductase (hsdA).